The primary structure comprises 110 residues: Vacuolar ATPase assembly integral membrane protein VMA21 (110 aa).

Positions 1–28 are disordered; that stretch reads MTTRRIIGQDGEEKTYLDVDPRGPPGPS. At 1-44 the chain is on the cytoplasmic side; the sequence is MTTRRIIGQDGEEKTYLDVDPRGPPGPSNISPAVPASVIWKLMS. Over residues 11–21 the composition is skewed to basic and acidic residues; the sequence is GEEKTYLDVDP. Residues 45–65 form a helical membrane-spanning segment; the sequence is FTFAMITLPIGTYFFTVNYVF. At 66 to 71 the chain is on the lumenal side; it reads GGNATY. Residues 72 to 92 traverse the membrane as a helical segment; it reads AGALAAIMANVVLIAYVIMAF. The Cytoplasmic segment spans residues 93-110; sequence KDDQAEQAEDAREAKKEL. Positions 107 to 110 match the Prevents secretion from ER motif; that stretch reads KKEL.

This sequence belongs to the VMA21 family.

It is found in the endoplasmic reticulum membrane. It localises to the endoplasmic reticulum-Golgi intermediate compartment membrane. The protein localises to the cytoplasmic vesicle. Its subcellular location is the COPII-coated vesicle membrane. In terms of biological role, required for the assembly of the V0 complex of the vacuolar ATPase (V-ATPase) in the endoplasmic reticulum. In Phaeosphaeria nodorum (strain SN15 / ATCC MYA-4574 / FGSC 10173) (Glume blotch fungus), this protein is Vacuolar ATPase assembly integral membrane protein VMA21.